The chain runs to 199 residues: UPF0301 protein Anae109_0457 (199 aa).

Belongs to the UPF0301 (AlgH) family.

The protein is UPF0301 protein Anae109_0457 of Anaeromyxobacter sp. (strain Fw109-5).